The following is a 182-amino-acid chain: Hypoxanthine/guanine phosphoribosyltransferase (182 aa).

The protein belongs to the purine/pyrimidine phosphoribosyltransferase family. Archaeal HPRT subfamily. Homodimer.

It localises to the cytoplasm. The enzyme catalyses IMP + diphosphate = hypoxanthine + 5-phospho-alpha-D-ribose 1-diphosphate. It carries out the reaction GMP + diphosphate = guanine + 5-phospho-alpha-D-ribose 1-diphosphate. The protein operates within purine metabolism; IMP biosynthesis via salvage pathway; IMP from hypoxanthine: step 1/1. In terms of biological role, catalyzes a salvage reaction resulting in the formation of IMP that is energically less costly than de novo synthesis. The polypeptide is Hypoxanthine/guanine phosphoribosyltransferase (Methanosphaerula palustris (strain ATCC BAA-1556 / DSM 19958 / E1-9c)).